The primary structure comprises 165 residues: Shikimate kinase (165 aa).

11–16 (GAGKTT) contacts ATP. A Mg(2+)-binding site is contributed by threonine 15. Aspartate 33, arginine 57, and glycine 78 together coordinate substrate. Arginine 116 lines the ATP pocket. Substrate is bound at residue arginine 134.

It belongs to the shikimate kinase family. As to quaternary structure, monomer. The cofactor is Mg(2+).

It localises to the cytoplasm. It catalyses the reaction shikimate + ATP = 3-phosphoshikimate + ADP + H(+). It participates in metabolic intermediate biosynthesis; chorismate biosynthesis; chorismate from D-erythrose 4-phosphate and phosphoenolpyruvate: step 5/7. Its function is as follows. Catalyzes the specific phosphorylation of the 3-hydroxyl group of shikimic acid using ATP as a cosubstrate. The polypeptide is Shikimate kinase (Bacillus cytotoxicus (strain DSM 22905 / CIP 110041 / 391-98 / NVH 391-98)).